Consider the following 482-residue polypeptide: Hydrogenase transcriptional regulatory protein HoxA (482 aa).

One can recognise a Response regulatory domain in the interval 7–121 (TVLVVDDETR…HLIDTVRQAV (115 aa)). Position 55 is a 4-aspartylphosphate (aspartate 55). The region spanning 167–394 (APGSPLDAVC…LRNEIYRAVA (228 aa)) is the Sigma-54 factor interaction domain. ATP is bound by residues 193 to 200 (GESGTGKE) and 265 to 274 (EIGDTSPAFQ). Positions 456 to 475 (KTHAAKELGLSRVGLRQKLL) form a DNA-binding region, H-T-H motif.

It localises to the cytoplasm. Its function is as follows. Probable member of the two-component regulatory system involved in the regulation of the hydrogenase activity. HoxA is probably phosphorylated by a sensory component (which could be HoxX) and then acts in conjunction with sigma-54 as a transcriptional activator. In Cupriavidus necator (strain ATCC 17699 / DSM 428 / KCTC 22496 / NCIMB 10442 / H16 / Stanier 337) (Ralstonia eutropha), this protein is Hydrogenase transcriptional regulatory protein HoxA (hoxA).